The chain runs to 467 residues: Hydroxymethylglutaryl-CoA synthase erg13A (467 aa).

Position 35 (alanine 35) interacts with (3S)-3-hydroxy-3-methylglutaryl-CoA. The active-site Proton donor/acceptor is the glutamate 86. (3S)-3-hydroxy-3-methylglutaryl-CoA is bound by residues cysteine 118, threonine 160, serine 209, histidine 259, lysine 268, asparagine 334, and serine 368. Catalysis depends on cysteine 118, which acts as the Acyl-thioester intermediate. Histidine 259 serves as the catalytic Proton donor/acceptor.

This sequence belongs to the thiolase-like superfamily. HMG-CoA synthase family.

The enzyme catalyses acetoacetyl-CoA + acetyl-CoA + H2O = (3S)-3-hydroxy-3-methylglutaryl-CoA + CoA + H(+). The protein operates within metabolic intermediate biosynthesis; (R)-mevalonate biosynthesis; (R)-mevalonate from acetyl-CoA: step 2/3. In terms of biological role, hydroxymethylglutaryl-CoA synthase; part of the first module of ergosterol biosynthesis pathway that includes the early steps of the pathway, conserved across all eukaryotes, and which results in the formation of mevalonate from acetyl-coenzyme A (acetyl-CoA). Erg13A and erg13B condense acetyl-CoA with acetoacetyl-CoA to form hydroxymethylglutaryl-CoA (HMG-CoA). The first module starts with the action of the cytosolic acetyl-CoA acetyltransferase erg10B that catalyzes the formation of acetoacetyl-CoA. The hydroxymethylglutaryl-CoA synthases erg13A and erg13B then condense acetyl-CoA with acetoacetyl-CoA to form HMG-CoA. The rate-limiting step of the early module is the reduction to mevalonate by the 3-hydroxy-3-methylglutaryl-coenzyme A (HMG-CoA) reductases hmg1 and hmg2. Mevalonate is also a precursor for the extracellular siderophore triacetylfusarinine C (TAFC). This is Hydroxymethylglutaryl-CoA synthase erg13A from Aspergillus fumigatus (strain ATCC MYA-4609 / CBS 101355 / FGSC A1100 / Af293) (Neosartorya fumigata).